Consider the following 318-residue polypeptide: CRISPR-associated endonuclease Cas1 1 (318 aa).

Residues E157, H222, and E237 each contribute to the Mn(2+) site.

The protein belongs to the CRISPR-associated endonuclease Cas1 family. Homodimer, forms a heterotetramer with a Cas2 homodimer. Mg(2+) serves as cofactor. It depends on Mn(2+) as a cofactor.

In terms of biological role, CRISPR (clustered regularly interspaced short palindromic repeat), is an adaptive immune system that provides protection against mobile genetic elements (viruses, transposable elements and conjugative plasmids). CRISPR clusters contain spacers, sequences complementary to antecedent mobile elements, and target invading nucleic acids. CRISPR clusters are transcribed and processed into CRISPR RNA (crRNA). Acts as a dsDNA endonuclease. Involved in the integration of spacer DNA into the CRISPR cassette. The sequence is that of CRISPR-associated endonuclease Cas1 1 from Francisella tularensis subsp. novicida (strain U112).